A 543-amino-acid polypeptide reads, in one-letter code: Cytochrome P450 monooxygenase 205 (543 aa).

The chain crosses the membrane as a helical span at residues 9 to 29 (LISLGVAALAVAVWKAIVMVI). N-linked (GlcNAc...) asparagine glycosylation is found at Asn332 and Asn434. Cys479 lines the heme pocket.

This sequence belongs to the cytochrome P450 family. The cofactor is heme.

The protein resides in the membrane. It functions in the pathway secondary metabolite biosynthesis. In terms of biological role, cytochrome P450 monooxygenase that is able to use carbazole and phenanthrene as substrates for oxidation. In Postia placenta (strain ATCC 44394 / Madison 698-R) (Brown rot fungus), this protein is Cytochrome P450 monooxygenase 205.